The sequence spans 284 residues: MVILVGGTNGLMALKVAKISGLPLCYSHVDRYPDGEKYFRFASNIDGEDVVIFNSMHPNPDEIIFETLLIAETAYSNGARSVTCVFPYFAYARSLDTVKGEALPIKTVVKVLKAAGVKKIITVDFHLQENVFGVEHVDLTGMEKLAEYCLEEFSDSFTVLAPDEKAAFWAEKFAAKANCDVVALRKIRIDAENVIIDDLRTGVEGDVVIVDDIVSTGGTVCQAARIAKRAGARRVFVACTHAILARDAMMRILESGIEDIVSTDTILSPVSHVSVADVIASALS.

Residue 34–36 coordinates ATP; the sequence is DGE. The Mg(2+) site is built by His126 and Asp163. The active site involves Lys186. Residues Arg188, Asp211, and 215–219 contribute to the D-ribose 5-phosphate site; that span reads STGGT.

It belongs to the ribose-phosphate pyrophosphokinase family. Class III (archaeal) subfamily. The cofactor is Mg(2+).

It localises to the cytoplasm. It catalyses the reaction D-ribose 5-phosphate + ATP = 5-phospho-alpha-D-ribose 1-diphosphate + AMP + H(+). It participates in metabolic intermediate biosynthesis; 5-phospho-alpha-D-ribose 1-diphosphate biosynthesis; 5-phospho-alpha-D-ribose 1-diphosphate from D-ribose 5-phosphate (route I): step 1/1. In terms of biological role, involved in the biosynthesis of the central metabolite phospho-alpha-D-ribosyl-1-pyrophosphate (PRPP) via the transfer of pyrophosphoryl group from ATP to 1-hydroxyl of ribose-5-phosphate (Rib-5-P). The protein is Ribose-phosphate pyrophosphokinase 1 of Archaeoglobus fulgidus (strain ATCC 49558 / DSM 4304 / JCM 9628 / NBRC 100126 / VC-16).